The sequence spans 273 residues: 3-methyl-2-oxobutanoate hydroxymethyltransferase (273 aa).

Positions 53 and 92 each coordinate Mg(2+). 3-methyl-2-oxobutanoate-binding positions include 53 to 54 (DS), Asp92, and Lys122. Mg(2+) is bound at residue Glu124. The active-site Proton acceptor is the Glu191.

It belongs to the PanB family. In terms of assembly, homodecamer; pentamer of dimers. It depends on Mg(2+) as a cofactor.

It localises to the cytoplasm. It carries out the reaction 3-methyl-2-oxobutanoate + (6R)-5,10-methylene-5,6,7,8-tetrahydrofolate + H2O = 2-dehydropantoate + (6S)-5,6,7,8-tetrahydrofolate. The protein operates within cofactor biosynthesis; (R)-pantothenate biosynthesis; (R)-pantoate from 3-methyl-2-oxobutanoate: step 1/2. Functionally, catalyzes the reversible reaction in which hydroxymethyl group from 5,10-methylenetetrahydrofolate is transferred onto alpha-ketoisovalerate to form ketopantoate. This chain is 3-methyl-2-oxobutanoate hydroxymethyltransferase, found in Parabacteroides distasonis (strain ATCC 8503 / DSM 20701 / CIP 104284 / JCM 5825 / NCTC 11152).